The sequence spans 99 residues: Integration host factor subunit beta (99 aa).

Belongs to the bacterial histone-like protein family. In terms of assembly, heterodimer of an alpha and a beta chain.

Its function is as follows. This protein is one of the two subunits of integration host factor, a specific DNA-binding protein that functions in genetic recombination as well as in transcriptional and translational control. The sequence is that of Integration host factor subunit beta from Laribacter hongkongensis (strain HLHK9).